We begin with the raw amino-acid sequence, 355 residues long: 4-dimethylallyltryptophan N-methyltransferase easF (355 aa).

It belongs to the methyltransferase superfamily. As to quaternary structure, homodimer.

It catalyses the reaction 4-(3-methylbut-2-enyl)-L-tryptophan + S-adenosyl-L-methionine = 4-(3-methylbut-2-enyl)-L-abrine + S-adenosyl-L-homocysteine + H(+). The protein operates within alkaloid biosynthesis; ergot alkaloid biosynthesis. In terms of biological role, 4-dimethylallyltryptophan N-methyltransferase; part of the gene cluster that mediates the biosynthesis of fungal ergot alkaloid. DmaW catalyzes the first step of ergot alkaloid biosynthesis by condensing dimethylallyl diphosphate (DMAP) and tryptophan to form 4-dimethylallyl-L-tryptophan. The second step is catalyzed by the methyltransferase easF that methylates 4-dimethylallyl-L-tryptophan in the presence of S-adenosyl-L-methionine, resulting in the formation of 4-dimethylallyl-L-abrine. The catalase easC and the FAD-dependent oxidoreductase easE then transform 4-dimethylallyl-L-abrine to chanoclavine-I which is further oxidized by easD in the presence of NAD(+), resulting in the formation of chanoclavine-I aldehyde. Agroclavine dehydrogenase easG then mediates the conversion of chanoclavine-I aldehyde to agroclavine via a non-enzymatic adduct reaction: the substrate is an iminium intermediate that is formed spontaneously from chanoclavine-I aldehyde in the presence of glutathione. Further conversion of agroclavine to paspalic acid is a two-step process involving oxidation of agroclavine to elymoclavine and of elymoclavine to paspalic acid, the second step being performed by the elymoclavine oxidase cloA. However, cloA does not encode a functional enzyme indicating that C.fusiformis terminates its ergot alkaloid pathway at elymoclavine. In Claviceps fusiformis (Ergot fungus), this protein is 4-dimethylallyltryptophan N-methyltransferase easF.